The primary structure comprises 496 residues: Acyltransferase clz6 (496 aa).

The active-site Proton acceptor is the H163.

This sequence belongs to the plant acyltransferase family. In terms of assembly, monomer.

The protein operates within secondary metabolite biosynthesis. Its function is as follows. Acyltransferase; part of the gene cluster that mediates the biosynthesis of squalestatin S1 (SQS1, also known as zaragozic acid A), a heavily oxidized fungal polyketide that offers potent cholesterol lowering activity by targeting squalene synthase (SS). SQS1 is composed of a 2,8-dioxobicyclic[3.2.1]octane-3,4,5-tricarboxyclic acid core that is connected to two lipophilic polyketide arms. These initial steps feature the priming of an unusual benzoic acid starter unit onto the highly reducing polyketide synthase clz14, followed by oxaloacetate extension and product release to generate a tricarboxylic acid containing product. The phenylalanine ammonia lyase (PAL) clz10 and the acyl-CoA ligase clz12 are involved in transforming phenylalanine into benzoyl-CoA. The citrate synthase-like protein clz17 is involved in connecting the C-alpha-carbons of the hexaketide chain and oxaloacetate to afford the tricarboxylic acid unit. The potential hydrolytic enzymes, clz11 and clz13, are in close proximity to pks2 and may participate in product release. On the other side, the tetraketide arm is synthesized by a the squalestatin tetraketide synthase clz2 and enzymatically esterified to the core in the last biosynthetic step, by the acetyltransferase clz6. The biosynthesis of the tetraketide must involve 3 rounds of chain extension. After the first and second rounds methyl-transfer occurs, and in all rounds of extension the ketoreductase and dehydratase are active. The enoyl reductase and C-MeT of clz2 are not active in the final round of extension. The acetyltransferase clz6 appears to have a broad substrate selectivity for its acyl CoA substrate, allowing the in vitro synthesis of novel squalestatins. The biosynthesis of SQS1 requires several oxidative steps likely performed by oxidoreductases clz3, clz15 and clz16. Finally, in support of the identification of the cluster as being responsible for SQS1 production, the cluster contains a gene encoding a putative squalene synthase (SS) clz20, suggesting a likely mechanism for self-resistance. This Cochliobolus lunatus (Filamentous fungus) protein is Acyltransferase clz6.